The sequence spans 401 residues: MNNLLCCALVFLDISIKWTTQETFPPKYLHYDEETSHQLLCDKCPPGTYLKQHCTAKWKTVCAPCPDHYYTDSWHTSDECLYCSPVCKELQYVKQECNRTHNRVCECKEGRYLEIEFCLKHRSCPPGFGVVQAGTPERNTVCKRCPDGFFSNETSSKAPCRKHTNCSVFGLLLTQKGNATHDNICSGNSESTQKCGIDVTLCEEAFFRFAVPTKFTPNWLSVLVDNLPGTKVNAESVERIKRQHSSQEQTFQLLKLWKHQNKDQDIVKKIIQDIDLCENSVQRHIGHANLTFEQLRSLMESLPGKKVGAEDIEKTIKACKPSDQILKLLSLWRIKNGDQDTLKGLMHALKHSKTYHFPKTVTQSLKKTIRFLHSFTMYKLYQKLFLEMIGNQVQSVKISCL.

Residues 1 to 21 (MNNLLCCALVFLDISIKWTTQ) form the signal peptide. TNFR-Cys repeat units follow at residues 24 to 62 (FPPK…KTVC), 65 to 105 (CPDH…NRVC), 107 to 142 (CKEG…NTVC), and 145 to 185 (CPDG…DNIC). 8 cysteine pairs are disulfide-bonded: C41/C54, C44/C62, C65/C80, C83/C97, C87/C105, C107/C118, C124/C142, and C145/C160. N-linked (GlcNAc...) asparagine glycosylation occurs at N98. 3 N-linked (GlcNAc...) asparagine glycosylation sites follow: N152, N165, and N178. Residues C166 and C185 are joined by a disulfide bond. 2 Death domains span residues 198-269 (DVTL…IVKK) and 270-365 (IIQD…TQSL). N289 is a glycosylation site (N-linked (GlcNAc...) asparagine).

Homodimer. Interacts with TNFSF10 and TNFSF11. Post-translationally, N-glycosylated. Contains sialic acid residues. The N-terminus is blocked. Highly expressed in adult lung, heart, kidney, liver, spleen, thymus, prostate, ovary, small intestine, thyroid, lymph node, trachea, adrenal gland, testis, and bone marrow. Detected at very low levels in brain, placenta and skeletal muscle. Highly expressed in fetal kidney, liver and lung.

It is found in the secreted. Functionally, acts as a decoy receptor for TNFSF11/RANKL and thereby neutralizes its function in osteoclastogenesis. Inhibits the activation of osteoclasts and promotes osteoclast apoptosis in vitro. Bone homeostasis seems to depend on the local ratio between TNFSF11 and TNFRSF11B. May also play a role in preventing arterial calcification. May act as decoy receptor for TNFSF10/TRAIL and protect against apoptosis. TNFSF10/TRAIL binding blocks the inhibition of osteoclastogenesis. In Homo sapiens (Human), this protein is Tumor necrosis factor receptor superfamily member 11B (TNFRSF11B).